Consider the following 512-residue polypeptide: 2,3-bisphosphoglycerate-independent phosphoglycerate mutase (512 aa).

Residues aspartate 11 and serine 61 each coordinate Mn(2+). The active-site Phosphoserine intermediate is serine 61. Substrate contacts are provided by residues histidine 122, 152–153 (RD), arginine 184, arginine 190, 259–262 (RADR), and lysine 332. Mn(2+) is bound by residues aspartate 399, histidine 403, aspartate 440, histidine 441, and histidine 459.

This sequence belongs to the BPG-independent phosphoglycerate mutase family. As to quaternary structure, monomer. It depends on Mn(2+) as a cofactor.

The catalysed reaction is (2R)-2-phosphoglycerate = (2R)-3-phosphoglycerate. The protein operates within carbohydrate degradation; glycolysis; pyruvate from D-glyceraldehyde 3-phosphate: step 3/5. In terms of biological role, catalyzes the interconversion of 2-phosphoglycerate and 3-phosphoglycerate. The chain is 2,3-bisphosphoglycerate-independent phosphoglycerate mutase from Francisella tularensis subsp. tularensis (strain WY96-3418).